We begin with the raw amino-acid sequence, 74 residues long: Beta-defensin 39 (74 aa).

An N-terminal signal peptide occupies residues 1–23 (MKISYFLLLILSLGSSQINPVSG). 3 disulfides stabilise this stretch: Cys-29–Cys-58, Cys-36–Cys-51, and Cys-41–Cys-59.

Belongs to the beta-defensin family. Only expressed in epididymis (caput, corpus and cauda).

The protein resides in the secreted. Its function is as follows. Has antibacterial activity. The sequence is that of Beta-defensin 39 (Defb39) from Mus musculus (Mouse).